Reading from the N-terminus, the 181-residue chain is ATP synthase subunit b, chloroplastic (181 aa).

Residues 28 to 50 (IINLSVVLGVLIYFGKGVLSNLL) traverse the membrane as a helical segment.

This sequence belongs to the ATPase B chain family. In terms of assembly, F-type ATPases have 2 components, F(1) - the catalytic core - and F(0) - the membrane proton channel. F(1) has five subunits: alpha(3), beta(3), gamma(1), delta(1), epsilon(1). F(0) has four main subunits: a(1), b(1), b'(1) and c(10-14). The alpha and beta chains form an alternating ring which encloses part of the gamma chain. F(1) is attached to F(0) by a central stalk formed by the gamma and epsilon chains, while a peripheral stalk is formed by the delta, b and b' chains.

Its subcellular location is the plastid. It is found in the chloroplast thylakoid membrane. F(1)F(0) ATP synthase produces ATP from ADP in the presence of a proton or sodium gradient. F-type ATPases consist of two structural domains, F(1) containing the extramembraneous catalytic core and F(0) containing the membrane proton channel, linked together by a central stalk and a peripheral stalk. During catalysis, ATP synthesis in the catalytic domain of F(1) is coupled via a rotary mechanism of the central stalk subunits to proton translocation. Functionally, component of the F(0) channel, it forms part of the peripheral stalk, linking F(1) to F(0). The sequence is that of ATP synthase subunit b, chloroplastic from Cryptomeria japonica (Japanese cedar).